The sequence spans 207 residues: ATP-dependent Clp protease proteolytic subunit (207 aa).

Residue S111 is the Nucleophile of the active site. H136 is a catalytic residue.

This sequence belongs to the peptidase S14 family. Fourteen ClpP subunits assemble into 2 heptameric rings which stack back to back to give a disk-like structure with a central cavity, resembling the structure of eukaryotic proteasomes.

It is found in the cytoplasm. The catalysed reaction is Hydrolysis of proteins to small peptides in the presence of ATP and magnesium. alpha-casein is the usual test substrate. In the absence of ATP, only oligopeptides shorter than five residues are hydrolyzed (such as succinyl-Leu-Tyr-|-NHMec, and Leu-Tyr-Leu-|-Tyr-Trp, in which cleavage of the -Tyr-|-Leu- and -Tyr-|-Trp bonds also occurs).. In terms of biological role, cleaves peptides in various proteins in a process that requires ATP hydrolysis. Has a chymotrypsin-like activity. Plays a major role in the degradation of misfolded proteins. This Aliivibrio fischeri (strain ATCC 700601 / ES114) (Vibrio fischeri) protein is ATP-dependent Clp protease proteolytic subunit.